A 347-amino-acid chain; its full sequence is 4-hydroxy-2-oxovalerate aldolase (347 aa).

The Pyruvate carboxyltransferase domain occupies isoleucine 2–methionine 252. Arginine 10–aspartate 11 contributes to the substrate binding site. A Mn(2+)-binding site is contributed by aspartate 11. The active-site Proton acceptor is histidine 14. Residues serine 164 and histidine 191 each contribute to the substrate site. Residues histidine 191 and histidine 193 each coordinate Mn(2+).

The protein belongs to the 4-hydroxy-2-oxovalerate aldolase family.

It catalyses the reaction (S)-4-hydroxy-2-oxopentanoate = acetaldehyde + pyruvate. This Burkholderia pseudomallei (strain 1106a) protein is 4-hydroxy-2-oxovalerate aldolase.